Consider the following 474-residue polypeptide: Glutamate--tRNA ligase (474 aa).

A 'HIGH' region motif is present at residues 10-20; it reads PSPTGYLHIGG. Cys-107, Cys-109, Cys-134, and Asp-136 together coordinate Zn(2+). A 'KMSKS' region motif is present at residues 244-248; the sequence is RLSKR. Residue Lys-247 participates in ATP binding.

This sequence belongs to the class-I aminoacyl-tRNA synthetase family. Glutamate--tRNA ligase type 1 subfamily. Monomer. Requires Zn(2+) as cofactor.

It is found in the cytoplasm. It carries out the reaction tRNA(Glu) + L-glutamate + ATP = L-glutamyl-tRNA(Glu) + AMP + diphosphate. In terms of biological role, catalyzes the attachment of glutamate to tRNA(Glu) in a two-step reaction: glutamate is first activated by ATP to form Glu-AMP and then transferred to the acceptor end of tRNA(Glu). This Anaeromyxobacter dehalogenans (strain 2CP-C) protein is Glutamate--tRNA ligase.